The sequence spans 432 residues: Proteinase-activated receptor 1 (432 aa).

Residues Met1–Ser21 form the signal peptide. Residues Ser22–Arg45 constitute a propeptide, removed for receptor activation. The Extracellular segment spans residues Ser46–Thr109. N-linked (GlcNAc...) asparagine glycosylation is found at Asn69 and Asn82. Residues Leu110–Val135 traverse the membrane as a helical segment. Residues Phe136–Ala144 are Cytoplasmic-facing. The helical transmembrane segment at Val145–Phe164 threads the bilayer. Residues Lys165–Arg183 are Extracellular-facing. Cys182 and Cys261 are joined by a disulfide. The chain crosses the membrane as a helical span at residues Phe184–Ile205. Residues Asp206–Arg225 are Cytoplasmic-facing. The chain crosses the membrane as a helical span at residues Ala226 to Leu246. Topologically, residues Lys247–Ser275 are extracellular. Residues Asn257 and Asn266 are each glycosylated (N-linked (GlcNAc...) asparagine). The helical transmembrane segment at Tyr276–Val295 threads the bilayer. Topologically, residues Cys296–Ala318 are cytoplasmic. A helical transmembrane segment spans residues Leu319–Ile341. At Val342–Tyr357 the chain is on the extracellular side. A helical transmembrane segment spans residues Phe358 to Ala381. Topologically, residues Ser382–Ala432 are cytoplasmic. The residue at position 425 (Ser425) is a Phosphoserine.

This sequence belongs to the G-protein coupled receptor 1 family. Proteolytic cleavage by thrombin generates a new N-terminus that functions as a tethered ligand. Also proteolytically cleaved by cathepsin CTSG. In terms of processing, phosphorylated in the C-terminal tail; probably mediating desensitization prior to the uncoupling and internalization of the receptor. Expressed in primary cultured oligodendrocytes.

The protein localises to the cell membrane. Its function is as follows. High affinity receptor that binds the activated thrombin, leading to calcium release from intracellular stores. The thrombin-activated receptor signaling pathway is mediated through PTX-insensitive G proteins, activation of phospholipase C resulting in the production of 1D-myo-inositol 1,4,5-trisphosphate (InsP3) which binds to InsP3 receptors causing calcium release from the stores. In astrocytes, the calcium released into the cytosol allows the Ca(2+)-dependent release of L-glutamate into the synaptic cleft through BEST1, that targets the neuronal postsynaptic GRIN2A/NMDAR receptor resulting in the synaptic plasticity regulation. May play a role in platelets activation and in vascular development. Mediates up-regulation of pro-inflammatory cytokines, such as MCP-1/CCL2 and IL6, triggered by coagulation factor Xa (F10) in cardiac fibroblasts and umbilical vein endothelial cells. This Rattus norvegicus (Rat) protein is Proteinase-activated receptor 1.